The chain runs to 230 residues: Large ribosomal subunit protein uL1 (230 aa).

It belongs to the universal ribosomal protein uL1 family. As to quaternary structure, part of the 50S ribosomal subunit.

Functionally, binds directly to 23S rRNA. The L1 stalk is quite mobile in the ribosome, and is involved in E site tRNA release. Protein L1 is also a translational repressor protein, it controls the translation of the L11 operon by binding to its mRNA. This chain is Large ribosomal subunit protein uL1, found in Bacillus anthracis (strain A0248).